The following is a 192-amino-acid chain: UPF0301 protein BMA10247_1859 (192 aa).

It belongs to the UPF0301 (AlgH) family.

The polypeptide is UPF0301 protein BMA10247_1859 (Burkholderia mallei (strain NCTC 10247)).